The sequence spans 131 residues: Small ribosomal subunit protein uS11 (131 aa).

This sequence belongs to the universal ribosomal protein uS11 family. As to quaternary structure, part of the 30S ribosomal subunit. Interacts with proteins S7 and S18. Binds to IF-3.

Its function is as follows. Located on the platform of the 30S subunit, it bridges several disparate RNA helices of the 16S rRNA. Forms part of the Shine-Dalgarno cleft in the 70S ribosome. This Neisseria gonorrhoeae (strain ATCC 700825 / FA 1090) protein is Small ribosomal subunit protein uS11.